The primary structure comprises 395 residues: Putative ankyrin repeat protein RF_0950 (395 aa).

ANK repeat units follow at residues 3–32 (YQKELLIEAIQEDNLKEVQKLLQAGVNPNT), 36–65 (YGKLCIRSAINNENLDIVKVLLDYGADPNA), 69–98 (IKDPIILEAIRSRELGIINSLLKKGANPNV), 101–130 (RHENPIILSALPRGVNIVNTLLNNGADPNQ), 134–166 (NGNTALSIILERTGDINVDVTALLIEKVKEKAL), 172–201 (NGETCLHLAAQQGKIQMFDKYLDYYQTVNI), and 205–234 (AGNTPLYWSKLLGHTEISDMLNKRAEELNE). The 124-residue stretch at 272–395 (KTKLIYQGGD…YLKVPILKEK (124 aa)) folds into the Glutamine amidotransferase type-1 domain. Cysteine 377 serves as the catalytic Nucleophile.

The polypeptide is Putative ankyrin repeat protein RF_0950 (Rickettsia felis (strain ATCC VR-1525 / URRWXCal2) (Rickettsia azadi)).